A 276-amino-acid chain; its full sequence is Shikimate dehydrogenase (NADP(+)) (276 aa).

Shikimate contacts are provided by residues 14–16 (SKS) and threonine 61. Lysine 65 acts as the Proton acceptor in catalysis. Aspartate 77 is an NADP(+) binding site. Residues asparagine 86 and aspartate 102 each contribute to the shikimate site. NADP(+) contacts are provided by residues 127–131 (GAGGA), 151–156 (NRTPDK), and methionine 214. Tyrosine 216 serves as a coordination point for shikimate. Glycine 238 serves as a coordination point for NADP(+).

Belongs to the shikimate dehydrogenase family. As to quaternary structure, homodimer.

It catalyses the reaction shikimate + NADP(+) = 3-dehydroshikimate + NADPH + H(+). Its pathway is metabolic intermediate biosynthesis; chorismate biosynthesis; chorismate from D-erythrose 4-phosphate and phosphoenolpyruvate: step 4/7. In terms of biological role, involved in the biosynthesis of the chorismate, which leads to the biosynthesis of aromatic amino acids. Catalyzes the reversible NADPH linked reduction of 3-dehydroshikimate (DHSA) to yield shikimate (SA). This is Shikimate dehydrogenase (NADP(+)) from Nitrosomonas europaea (strain ATCC 19718 / CIP 103999 / KCTC 2705 / NBRC 14298).